We begin with the raw amino-acid sequence, 655 residues long: uncharacterized protein (655 aa).

An N-terminal signal peptide occupies residues 1 to 23 (MKRTIKYLSFLGLIPFLSITTIS). Cys24 is lipidated: N-palmitoyl cysteine. Residue Cys24 is the site of S-diacylglycerol cysteine attachment.

Belongs to the MG067/MG068/MG395 family.

It localises to the cell membrane. This is an uncharacterized protein from Mycoplasma capricolum subsp. capricolum (strain California kid / ATCC 27343 / NCTC 10154).